The sequence spans 221 residues: DNA repair and recombination protein RadB (221 aa).

Belongs to the eukaryotic RecA-like protein family. RadB subfamily.

Involved in DNA repair and in homologous recombination. May regulate the cleavage reactions of the branch-structured DNA. Has a very weak ATPase activity that is not stimulated by DNA. Binds DNA but does not promote DNA strands exchange. The polypeptide is DNA repair and recombination protein RadB (Thermococcus gammatolerans (strain DSM 15229 / JCM 11827 / EJ3)).